The sequence spans 256 residues: Deoxyribose-phosphate aldolase (256 aa).

D102 acts as the Proton donor/acceptor in catalysis. K165 functions as the Schiff-base intermediate with acetaldehyde in the catalytic mechanism. The active-site Proton donor/acceptor is the K197.

It belongs to the DeoC/FbaB aldolase family. DeoC type 2 subfamily.

It localises to the cytoplasm. It catalyses the reaction 2-deoxy-D-ribose 5-phosphate = D-glyceraldehyde 3-phosphate + acetaldehyde. It participates in carbohydrate degradation; 2-deoxy-D-ribose 1-phosphate degradation; D-glyceraldehyde 3-phosphate and acetaldehyde from 2-deoxy-alpha-D-ribose 1-phosphate: step 2/2. Catalyzes a reversible aldol reaction between acetaldehyde and D-glyceraldehyde 3-phosphate to generate 2-deoxy-D-ribose 5-phosphate. This is Deoxyribose-phosphate aldolase from Shewanella baltica (strain OS155 / ATCC BAA-1091).